The sequence spans 90 residues: Small ribosomal subunit protein uS15c (90 aa).

It belongs to the universal ribosomal protein uS15 family. Part of the 30S ribosomal subunit.

The protein localises to the plastid. Its subcellular location is the chloroplast. The polypeptide is Small ribosomal subunit protein uS15c (rps15) (Daucus carota (Wild carrot)).